The primary structure comprises 424 residues: ATP-citrate synthase alpha chain protein 3 (424 aa).

3 residues coordinate citrate: N343, T345, and R376.

It belongs to the succinate/malate CoA ligase beta subunit family. In terms of assembly, heterooctamer of 4 alpha and 4 beta chains.

It is found in the cytoplasm. Its subcellular location is the cytosol. The enzyme catalyses oxaloacetate + acetyl-CoA + ADP + phosphate = citrate + ATP + CoA. ATP citrate-lyase is the primary enzyme responsible for the synthesis of cytosolic acetyl-CoA, used for the elongation of fatty acids and biosynthesis of isoprenoids, flavonoids and malonated derivatives. May supply substrate to the cytosolic acetyl-CoA carboxylase, which generates the malonyl-CoA used for the synthesis of a multitude of compounds, including very long chain fatty acids and flavonoids. Required for normal growth and development and elongation of C18 fatty acids to C20 to C24 fatty acids in seeds. In contrast to all known animal ACL enzymes having a homomeric structure, plant ACLs are composed of alpha and beta chains. The protein is ATP-citrate synthase alpha chain protein 3 (ACLA-3) of Arabidopsis thaliana (Mouse-ear cress).